Here is a 533-residue protein sequence, read N- to C-terminus: Purine-cytosine permease FCY2 (533 aa).

Residues 1–98 (MLEEGNNVYE…NAASMWFSAN (98 aa)) lie on the Cytoplasmic side of the membrane. Residue K16 forms a Glycyl lysine isopeptide (Lys-Gly) (interchain with G-Cter in ubiquitin) linkage. S18 carries the phosphoserine modification. A helical transmembrane segment spans residues 99–119 (MVIASYALGALGPMVFGLNFG). The Extracellular segment spans residues 120–121 (QS). A helical membrane pass occupies residues 122 to 141 (VLVIIFFNIMGLIFVAFFSV). Residues 142-198 (FGAELGLRQMILSRYLVGNVTARIFSLINVIACVGWGIVNTSVSAQLLNMVNEGSGH) lie on the Cytoplasmic side of the membrane. Positions 165-184 (IFSLINVIACVGWGIVNTSV) are surface seeking. Residues 199-218 (VCPIWAGCLIIIGGTVLVTF) form a helical membrane-spanning segment. Residues 219-256 (FGYSVIHAYEKWSWVPNFAVFLVIIAQLSRSGKFKGGE) lie on the Extracellular side of the membrane. Residues 257 to 276 (WVGGATTAGSVLSFGSSIFG) traverse the membrane as a helical segment. Over 277 to 300 (FAAGWTTYAADYTVYMPKSTNKYK) the chain is Cytoplasmic. A helical transmembrane segment spans residues 301–320 (IFFSLVAGLAFPLFFTMILG). Over 321–347 (AASAMAALNDPTWKAYYDKNAMGGVIY) the chain is Extracellular. The chain crosses the membrane as a helical span at residues 348 to 367 (AILVPNSLNGFGQFCCVLLA). Over 368 to 398 (LSTIANNIPNMYTVALSAQALWAPLAKIPRV) the chain is Cytoplasmic. Residues 399-418 (VWTMAGNAATLGISIPATYY) traverse the membrane as a helical segment. Topologically, residues 419–465 (FDGFMENFMDSIGYYLAIYIAISCSEHFFYRRSFSAYNIDDWDNWEH) are extracellular. Residues 466–485 (LPIGIAGTAALIVGAFGVAL) form a helical membrane-spanning segment. The Cytoplasmic portion of the chain corresponds to 486–533 (GMCQTYWVGEIGRLIGKYGGDIGFELGASWAFIIYNILRPLELKYFGR).

The protein belongs to the purine-cytosine permease (2.A.39) family. Post-translationally, not N-glycosylated.

The protein localises to the membrane. In terms of biological role, this permease has a broad specificity towards purines, and also transport cytosine and 5-methylcytosine but neither uracil nor thymine. This Saccharomyces cerevisiae (strain ATCC 204508 / S288c) (Baker's yeast) protein is Purine-cytosine permease FCY2 (FCY2).